Reading from the N-terminus, the 190-residue chain is dCTP deaminase (190 aa).

A dCTP-binding site is contributed by 113–118 (KSTYAR). Catalysis depends on E139, which acts as the Proton donor/acceptor. The dCTP site is built by Q158, Y172, K181, and Q182.

It belongs to the dCTP deaminase family. In terms of assembly, homotrimer.

The catalysed reaction is dCTP + H2O + H(+) = dUTP + NH4(+). It participates in pyrimidine metabolism; dUMP biosynthesis; dUMP from dCTP (dUTP route): step 1/2. Its function is as follows. Catalyzes the deamination of dCTP to dUTP. The protein is dCTP deaminase of Chlamydia pneumoniae (Chlamydophila pneumoniae).